The chain runs to 710 residues: Putative membrane protein IgaA homolog (710 aa).

A topological domain (periplasmic) is located at residue methionine 1. A helical membrane pass occupies residues 2–22; the sequence is STILIFIAALLACSLLAIWRF. Over 23-204 the chain is Cytoplasmic; sequence RVKSRRGSLP…YALSRPAGLR (182 aa). 2 consecutive transmembrane segments (helical) span residues 205 to 225 and 226 to 246; these read EALLIVASFLLFFFCLITPDV and FVPWMIGGAILLLAAGLWGLF. At 247 to 339 the chain is on the cytoplasmic side; the sequence is APPSKSALRE…KNFPLQHWLR (93 aa). A helical transmembrane segment spans residues 340-360; it reads STVIAIGSLLVLFMLLFWIPL. Residues 361 to 656 lie on the Periplasmic side of the membrane; sequence DMPIKFTLSW…PDKSGWWRYL (296 aa). Residues 657–677 form a helical membrane-spanning segment; it reads GTTLLMLAMIVSAVYNGIQAF. Topologically, residues 678 to 710 are cytoplasmic; the sequence is RRYQRHRTRMADIQEYYESCLNPRLTVSPENLI.

The protein belongs to the IgaA family.

The protein resides in the cell inner membrane. This Salmonella typhi protein is Putative membrane protein IgaA homolog (yrfF).